We begin with the raw amino-acid sequence, 537 residues long: Protein disulfide isomerase-like 1-5 (537 aa).

The signal sequence occupies residues 1 to 29 (MSLIPKPISKVSTFTFILLILLSFTIIIA). One can recognise a Thioredoxin 1 domain in the interval 58 to 184 (LQEDRPEQQS…IVIWVQKKTG (127 aa)). The active-site Nucleophile is Cys-106. 3 N-linked (GlcNAc...) asparagine glycosylation sites follow: Asn-160, Asn-364, and Asn-416. Positions 380 to 526 (LLESDPSPNS…IAVFINEELL (147 aa)) constitute a Thioredoxin 2 domain. Active-site nucleophile residues include Cys-447 and Cys-450. A disulfide bridge connects residues Cys-447 and Cys-450. Asn-530 carries N-linked (GlcNAc...) asparagine glycosylation. The short motif at 534-537 (KDEL) is the Prevents secretion from ER element.

Belongs to the protein disulfide isomerase family. As to expression, widely expressed.

It localises to the endoplasmic reticulum lumen. It carries out the reaction Catalyzes the rearrangement of -S-S- bonds in proteins.. In terms of biological role, acts as a protein-folding catalyst that interacts with nascent polypeptides to catalyze the formation, isomerization, and reduction or oxidation of disulfide bonds. The chain is Protein disulfide isomerase-like 1-5 (PDIL1-5) from Arabidopsis thaliana (Mouse-ear cress).